A 624-amino-acid chain; its full sequence is MKGQETRGFQSEVKQLLHLMIHSLYSNKEIFLRELISNASDAADKLRFRALSNPDLYEGDSELRVRVSFDKDKRTLTIADNGVGMNRDEVIDHLGTIAKSGTKSFLESMGSDQAKDSQLIGQFGVGFYSAFIVADKVTVRTRAAGDKPENGVFWESAGEGEYTVADITKNDRGTEITLHLREGEDEFLDDWRVRSIISKYSDHIALPVEIEKREEKDGETVISWEKINKAQALWTRNKSEIKDDEYNEFYKHIAHDFTDPLTWSHNRVEGKQEYTSLLYIPSQAPWDLWNRDHKHGLKLYVQRVFIMDDAEQFMPNYLRFVRGLIDSNDLPLNVSREILQDSTVTRNLRSALTKRVLQMLEKLAKDDAEKYQTFWKQFGLVLKEGPAEDHANQEAIAKLLRFASTHTDSSAQTVSLEDYVSRMKEGQEKIYYITADSYAAAKNSPHLELLRKKGIEVLLLSDRIDEWMMNYLTEFDGKAFQSVAKADESIEKLADEVDENAKEAEKALEPFVERVKTLLGDRVKEVRLTHRLTDTPAIVTTDADEMSTQMAKLFAAAGQSVPEVKYIFELNPDHVLVKRTADTEDEAQFKEWVELLLDQALFAERGTLEDPNQFIRRMNQLLVS.

Positions Met-1–Arg-336 are a; substrate-binding. The interval Glu-337–Lys-552 is b. Residues Leu-553–Ser-624 are c.

The protein belongs to the heat shock protein 90 family. In terms of assembly, homodimer.

It localises to the cytoplasm. Functionally, molecular chaperone. Has ATPase activity. The sequence is that of Chaperone protein HtpG from Salmonella paratyphi A (strain ATCC 9150 / SARB42).